A 194-amino-acid polypeptide reads, in one-letter code: Transposon Tn2501 resolvase (194 aa).

Positions 3 to 143 (RVFAYCRVST…SGIARAKATG (141 aa)) constitute a Resolvase/invertase-type recombinase catalytic domain. Serine 11 (O-(5'-phospho-DNA)-serine intermediate) is an active-site residue. The H-T-H motif DNA-binding region spans 170–189 (ISAIAREFNTTRQTILRVKA).

Belongs to the site-specific recombinase resolvase family.

Resolvase catalyzes the resolution (a site-specific recombination) of the cointegrated replicon to yield the final transposition products. The sequence is that of Transposon Tn2501 resolvase (tnpR) from Escherichia coli.